The following is a 466-amino-acid chain: Ribulose bisphosphate carboxylase large chain (466 aa).

K5 carries the post-translational modification N6,N6,N6-trimethyllysine. N114 and T164 together coordinate substrate. The active-site Proton acceptor is K166. A substrate-binding site is contributed by K168. Residues K192, D194, and E195 each contribute to the Mg(2+) site. Residue K192 is modified to N6-carboxylysine. Catalysis depends on H285, which acts as the Proton acceptor. Residues R286, H318, and S370 each contribute to the substrate site.

Belongs to the RuBisCO large chain family. Type I subfamily. As to quaternary structure, heterohexadecamer of 8 large chains and 8 small chains. The cofactor is Mg(2+).

It is found in the plastid. The protein resides in the chloroplast. It catalyses the reaction 2 (2R)-3-phosphoglycerate + 2 H(+) = D-ribulose 1,5-bisphosphate + CO2 + H2O. The catalysed reaction is D-ribulose 1,5-bisphosphate + O2 = 2-phosphoglycolate + (2R)-3-phosphoglycerate + 2 H(+). Its function is as follows. RuBisCO catalyzes two reactions: the carboxylation of D-ribulose 1,5-bisphosphate, the primary event in carbon dioxide fixation, as well as the oxidative fragmentation of the pentose substrate in the photorespiration process. Both reactions occur simultaneously and in competition at the same active site. This is Ribulose bisphosphate carboxylase large chain from Lobelia sp.